The sequence spans 366 residues: Ribosomal RNA large subunit methyltransferase M (366 aa).

S-adenosyl-L-methionine-binding positions include Ser188, 221 to 224, Asp240, Asp260, and Asp277; that span reads CPGG. Lys306 acts as the Proton acceptor in catalysis.

This sequence belongs to the class I-like SAM-binding methyltransferase superfamily. RNA methyltransferase RlmE family. RlmM subfamily. In terms of assembly, monomer.

The protein resides in the cytoplasm. The enzyme catalyses cytidine(2498) in 23S rRNA + S-adenosyl-L-methionine = 2'-O-methylcytidine(2498) in 23S rRNA + S-adenosyl-L-homocysteine + H(+). Functionally, catalyzes the 2'-O-methylation at nucleotide C2498 in 23S rRNA. The protein is Ribosomal RNA large subunit methyltransferase M of Salmonella agona (strain SL483).